We begin with the raw amino-acid sequence, 118 residues long: Putative pterin-4-alpha-carbinolamine dehydratase (118 aa).

Belongs to the pterin-4-alpha-carbinolamine dehydratase family.

The enzyme catalyses (4aS,6R)-4a-hydroxy-L-erythro-5,6,7,8-tetrahydrobiopterin = (6R)-L-erythro-6,7-dihydrobiopterin + H2O. This is Putative pterin-4-alpha-carbinolamine dehydratase from Xanthomonas campestris pv. campestris (strain B100).